The following is a 251-amino-acid chain: Zinc import ATP-binding protein ZnuC (251 aa).

The region spanning 5-220 (VSLENVSVSF…PEFISMFGPR (216 aa)) is the ABC transporter domain. Residue 37-44 (GPNGAGKS) coordinates ATP.

It belongs to the ABC transporter superfamily. Zinc importer (TC 3.A.1.15.5) family. The complex is composed of two ATP-binding proteins (ZnuC), two transmembrane proteins (ZnuB) and a solute-binding protein (ZnuA).

Its subcellular location is the cell inner membrane. It catalyses the reaction Zn(2+)(out) + ATP(in) + H2O(in) = Zn(2+)(in) + ADP(in) + phosphate(in) + H(+)(in). Its function is as follows. Part of the ABC transporter complex ZnuABC involved in zinc import. Responsible for energy coupling to the transport system. The chain is Zinc import ATP-binding protein ZnuC from Salmonella typhi.